We begin with the raw amino-acid sequence, 301 residues long: Quinolinate synthase (301 aa).

2 residues coordinate iminosuccinate: histidine 21 and serine 38. A [4Fe-4S] cluster-binding site is contributed by cysteine 83. Iminosuccinate contacts are provided by residues 109–111 (YIN) and serine 126. A [4Fe-4S] cluster-binding site is contributed by cysteine 169. Iminosuccinate contacts are provided by residues 195–197 (HPE) and threonine 212. Cysteine 257 serves as a coordination point for [4Fe-4S] cluster.

The protein belongs to the quinolinate synthase family. Type 2 subfamily. [4Fe-4S] cluster serves as cofactor.

The protein localises to the cytoplasm. The enzyme catalyses iminosuccinate + dihydroxyacetone phosphate = quinolinate + phosphate + 2 H2O + H(+). The protein operates within cofactor biosynthesis; NAD(+) biosynthesis; quinolinate from iminoaspartate: step 1/1. Catalyzes the condensation of iminoaspartate with dihydroxyacetone phosphate to form quinolinate. This chain is Quinolinate synthase, found in Clostridium perfringens (strain SM101 / Type A).